The sequence spans 92 residues: MVRSVWKGPFVEASLLKKADAARASGRHDVIKIWSRRSTILPQFVGLTFGVYNGQKHVPVSVNEEMVGHKFGEFSPTRTFHGHAGDKKSKKG.

Functionally, protein S19 forms a complex with S13 that binds strongly to the 16S ribosomal RNA. The chain is Small ribosomal subunit protein uS19 from Rhodopseudomonas palustris (strain ATCC BAA-98 / CGA009).